Here is a 201-residue protein sequence, read N- to C-terminus: UPF0637 protein LSEI_1198 (201 aa).

Belongs to the UPF0637 family.

The protein is UPF0637 protein LSEI_1198 of Lacticaseibacillus paracasei (strain ATCC 334 / BCRC 17002 / CCUG 31169 / CIP 107868 / KCTC 3260 / NRRL B-441) (Lactobacillus paracasei).